A 152-amino-acid polypeptide reads, in one-letter code: MSVDLSSYRDQHFKGSRSEQERLLRLSTTLYVGNMSFYTTEEQIYELFSKCGDVKKVIMGLDRFHKTPCGFCFVEYYTREDAENAIRYVNGTKLDDRIIRTDWDAGFVEGRQFGRGKSGGQVRDEYRTDYDSGRGGYGKLMAQRVVPPPAVV.

MRNA contacts are provided by residues Tyr-8, Tyr-31, 100–104 (RTDWD), 111–115 (RQFGR), and 121–122 (QV). An RRM domain is found at 28 to 106 (TTLYVGNMSF…RIIRTDWDAG (79 aa)).

This sequence belongs to the RRM NCBP2 family. Component of the nuclear cap-binding complex (CBC), a heterodimer composed of Cbp80 and Cbp20 that interacts with m7GpppG-capped RNA.

The protein resides in the nucleus. Component of the cap-binding complex (CBC), which binds co-transcriptionally to the 5' cap of pre-mRNAs and is involved in various processes such as pre-mRNA splicing and RNA-mediated gene silencing (RNAi). The CBC complex is involved in miRNA-mediated RNA interference and is required for primary microRNAs (miRNAs) processing. Also involved in innate immunity via the short interfering RNAs (siRNAs) processing machinery by restricting the viral RNA production. In the CBC complex, Cbp20 recognizes and binds capped RNAs (m7GpppG-capped RNA) but requires Cbp80 to stabilize the movement of its N-terminal loop and lock the CBC into a high affinity cap-binding state with the cap structure. The chain is Nuclear cap-binding protein subunit 2 (Cbp20) from Ixodes scapularis (Black-legged tick).